The chain runs to 191 residues: Probable GTP-binding protein EngB (191 aa).

In terms of domain architecture, EngB-type G spans 19–188 (NIPEICFMGR…HKKIFELFVE (170 aa)). GTP contacts are provided by residues 27 to 34 (GRSNVGKS), 53 to 57 (GRTQL), 70 to 73 (DLPG), 136 to 139 (NKFD), and 167 to 169 (AST). The Mg(2+) site is built by Ser34 and Thr55.

It belongs to the TRAFAC class TrmE-Era-EngA-EngB-Septin-like GTPase superfamily. EngB GTPase family. The cofactor is Mg(2+).

Its function is as follows. Necessary for normal cell division and for the maintenance of normal septation. The chain is Probable GTP-binding protein EngB from Mycoplasma genitalium (strain ATCC 33530 / DSM 19775 / NCTC 10195 / G37) (Mycoplasmoides genitalium).